A 303-amino-acid polypeptide reads, in one-letter code: L(+)-tartrate dehydratase subunit alpha (303 aa).

Iron-sulfur cluster-binding residues include C71, C190, and C277.

This sequence belongs to the class-I fumarase family. Tetramer of two alpha and two beta subunits. The cofactor is iron-sulfur cluster.

It catalyses the reaction (2R,3R)-tartrate = oxaloacetate + H2O. This chain is L(+)-tartrate dehydratase subunit alpha (ttdA), found in Escherichia coli O6:K15:H31 (strain 536 / UPEC).